A 465-amino-acid polypeptide reads, in one-letter code: Ribulose bisphosphate carboxylase large chain (465 aa).

Residue Lys4 is modified to N6,N6,N6-trimethyllysine. 2 residues coordinate substrate: Asn113 and Thr163. Lys165 functions as the Proton acceptor in the catalytic mechanism. Residue Lys167 coordinates substrate. The Mg(2+) site is built by Lys191, Asp193, and Glu194. Lys191 is subject to N6-carboxylysine. His284 acts as the Proton acceptor in catalysis. Substrate contacts are provided by Arg285, His317, and Ser369.

Belongs to the RuBisCO large chain family. Type I subfamily. Heterohexadecamer of 8 large chains and 8 small chains; disulfide-linked. The disulfide link is formed within the large subunit homodimers. It depends on Mg(2+) as a cofactor. Post-translationally, the disulfide bond which can form in the large chain dimeric partners within the hexadecamer appears to be associated with oxidative stress and protein turnover.

The protein resides in the plastid. The protein localises to the chloroplast. The catalysed reaction is 2 (2R)-3-phosphoglycerate + 2 H(+) = D-ribulose 1,5-bisphosphate + CO2 + H2O. The enzyme catalyses D-ribulose 1,5-bisphosphate + O2 = 2-phosphoglycolate + (2R)-3-phosphoglycerate + 2 H(+). RuBisCO catalyzes two reactions: the carboxylation of D-ribulose 1,5-bisphosphate, the primary event in carbon dioxide fixation, as well as the oxidative fragmentation of the pentose substrate in the photorespiration process. Both reactions occur simultaneously and in competition at the same active site. In Byrsonima crassifolia (Cajuil cimarron), this protein is Ribulose bisphosphate carboxylase large chain.